Here is a 491-residue protein sequence, read N- to C-terminus: Probable cytosol aminopeptidase (491 aa).

2 residues coordinate Mn(2+): Lys-264 and Asp-269. Lys-276 is an active-site residue. Asp-287, Asp-346, and Glu-348 together coordinate Mn(2+). Arg-350 is a catalytic residue.

This sequence belongs to the peptidase M17 family. Mn(2+) serves as cofactor.

It is found in the cytoplasm. The enzyme catalyses Release of an N-terminal amino acid, Xaa-|-Yaa-, in which Xaa is preferably Leu, but may be other amino acids including Pro although not Arg or Lys, and Yaa may be Pro. Amino acid amides and methyl esters are also readily hydrolyzed, but rates on arylamides are exceedingly low.. It carries out the reaction Release of an N-terminal amino acid, preferentially leucine, but not glutamic or aspartic acids.. Its function is as follows. Presumably involved in the processing and regular turnover of intracellular proteins. Catalyzes the removal of unsubstituted N-terminal amino acids from various peptides. This is Probable cytosol aminopeptidase from Xylella fastidiosa (strain 9a5c).